The sequence spans 141 residues: uncharacterized protein (141 aa).

This sequence belongs to the PhzA/PhzB family.

This is an uncharacterized protein from Pseudomonas aeruginosa (strain ATCC 15692 / DSM 22644 / CIP 104116 / JCM 14847 / LMG 12228 / 1C / PRS 101 / PAO1).